Reading from the N-terminus, the 161-residue chain is Phosphopantetheine adenylyltransferase (161 aa).

Ser-10 lines the substrate pocket. Residues 10–11 and His-18 contribute to the ATP site; that span reads SF. Positions 42, 75, and 89 each coordinate substrate. Residues 90–92, Glu-100, and 125–131 each bind ATP; these read GLR and LSPISSS.

The protein belongs to the bacterial CoaD family. As to quaternary structure, homohexamer. Mg(2+) serves as cofactor.

The protein localises to the cytoplasm. It catalyses the reaction (R)-4'-phosphopantetheine + ATP + H(+) = 3'-dephospho-CoA + diphosphate. It participates in cofactor biosynthesis; coenzyme A biosynthesis; CoA from (R)-pantothenate: step 4/5. Functionally, reversibly transfers an adenylyl group from ATP to 4'-phosphopantetheine, yielding dephospho-CoA (dPCoA) and pyrophosphate. The sequence is that of Phosphopantetheine adenylyltransferase from Streptococcus agalactiae serotype Ia (strain ATCC 27591 / A909 / CDC SS700).